Here is a 637-residue protein sequence, read N- to C-terminus: 3D-(3,5/4)-trihydroxycyclohexane-1,2-dione hydrolase (637 aa).

Glu-66 contacts thiamine diphosphate. Residues 442–522 (SLPGDLQRLW…INVLLFDNSG (81 aa)) form a thiamine pyrophosphate binding region. Mg(2+) contacts are provided by Asp-493 and Asn-520.

This sequence belongs to the TPP enzyme family. Mg(2+) is required as a cofactor. The cofactor is thiamine diphosphate.

It catalyses the reaction 3D-3,5/4-trihydroxycyclohexane-1,2-dione + H2O = 5-deoxy-D-glucuronate + H(+). It functions in the pathway polyol metabolism; myo-inositol degradation into acetyl-CoA; acetyl-CoA from myo-inositol: step 3/7. Involved in the cleavage of the C1-C2 bond of 3D-(3,5/4)-trihydroxycyclohexane-1,2-dione (THcHDO) to yield 5-deoxy-glucuronate (5DG). The chain is 3D-(3,5/4)-trihydroxycyclohexane-1,2-dione hydrolase (iolD) from Bacillus subtilis (strain 168).